The sequence spans 485 residues: Noelin (485 aa).

An N-terminal signal peptide occupies residues 1-16 (MSVPLLKIGVVLSTMA). 8 N-linked (GlcNAc...) asparagine glycosylation sites follow: asparagine 33, asparagine 103, asparagine 187, asparagine 288, asparagine 307, asparagine 394, asparagine 431, and asparagine 473. A coiled-coil region spans residues 87–225 (RDARTKQLRQ…ERLRACMQKL (139 aa)). The Olfactomedin-like domain occupies 226–478 (ACGKLTGISD…QILYNVTLFH (253 aa)). A disulfide bridge connects residues cysteine 227 and cysteine 409.

Homotetramer; disulfide-linked. Dimer of dimers, giving rise to a V-shaped homotretramer. Isoform 1 and isoform 3 interact with RTN4R. Identified in a complex with RTN4R and LINGO1. Peripherally associated with AMPAR complex. AMPAR complex consists of an inner core made of 4 pore-forming GluA/GRIA proteins (GRIA1, GRIA2, GRIA3 and GRIA4) and 4 major auxiliary subunits arranged in a twofold symmetry. One of the two pairs of distinct binding sites is occupied either by CNIH2, CNIH3 or CACNG2, CACNG3. The other harbors CACNG2, CACNG3, CACNG4, CACNG8 or GSG1L. This inner core of AMPAR complex is complemented by outer core constituents binding directly to the GluA/GRIA proteins at sites distinct from the interaction sites of the inner core constituents. Outer core constituents include at least PRRT1, PRRT2, CKAMP44/SHISA9, FRRS1L and NRN1. The proteins of the inner and outer core serve as a platform for other, more peripherally associated AMPAR constituents, including OLFM1. Alone or in combination, these auxiliary subunits control the gating and pharmacology of the AMPAR complex and profoundly impact their biogenesis and protein processing. Interacts with OLFM2.

The protein localises to the secreted. It is found in the synapse. It localises to the endoplasmic reticulum. Its subcellular location is the cell projection. The protein resides in the axon. The protein localises to the perikaryon. Its function is as follows. Contributes to the regulation of axonal growth in the embryonic and adult central nervous system by inhibiting interactions between RTN4R and LINGO1. Inhibits RTN4R-mediated axon growth cone collapse. May play an important role in regulating the production of neural crest cells by the neural tube. May be required for normal responses to olfactory stimuli. This Homo sapiens (Human) protein is Noelin (OLFM1).